A 191-amino-acid chain; its full sequence is LOB domain-containing protein 19 (191 aa).

Positions 15-117 constitute an LOB domain; sequence GPCGACKFLR…AELAHVQARL (103 aa).

Belongs to the LOB domain-containing protein family. Expressed in shoots, roots and floral tissues, but not in stems or leaves.

In Arabidopsis thaliana (Mouse-ear cress), this protein is LOB domain-containing protein 19 (LBD19).